The chain runs to 550 residues: Glucose import ATP-binding protein TsgD13 (550 aa).

2 consecutive ABC transporter domains span residues 7–270 (LRME…VGRE) and 287–533 (LRAR…TGGG). 39–46 (GENGAGKS) serves as a coordination point for ATP. Positions 529–550 (MTGGGDATATAGAQVRGLGGSS) are disordered.

Belongs to the ABC transporter superfamily. As to quaternary structure, the complex is composed of two ATP-binding proteins (TsgD13), two transmembrane proteins (TsgB13 and TsgC13) and a solute-binding protein (TsgA13).

Its subcellular location is the cell membrane. The catalysed reaction is D-glucose(out) + ATP + H2O = D-glucose(in) + ADP + phosphate + H(+). Part of an ABC transporter complex involved in glucose import. Responsible for energy coupling to the transport system. The protein is Glucose import ATP-binding protein TsgD13 (tsgD13) of Haloferax volcanii (strain ATCC 29605 / DSM 3757 / JCM 8879 / NBRC 14742 / NCIMB 2012 / VKM B-1768 / DS2) (Halobacterium volcanii).